Consider the following 466-residue polypeptide: Soluble pyridine nucleotide transhydrogenase (466 aa).

Residue 36 to 45 (EKESSVGGGC) participates in FAD binding.

This sequence belongs to the class-I pyridine nucleotide-disulfide oxidoreductase family. FAD is required as a cofactor.

It is found in the cytoplasm. It catalyses the reaction NAD(+) + NADPH = NADH + NADP(+). In terms of biological role, conversion of NADPH, generated by peripheral catabolic pathways, to NADH, which can enter the respiratory chain for energy generation. The chain is Soluble pyridine nucleotide transhydrogenase from Vibrio atlanticus (strain LGP32) (Vibrio splendidus (strain Mel32)).